The primary structure comprises 46 residues: MAKMKHGSAQFRPDHLGTQPRKSDANKGKKMNTKGNENPQYIPPKG.

Positions Met1–Gly46 are disordered.

It belongs to the SspN family.

It is found in the spore core. The sequence is that of Small, acid-soluble spore protein N from Halalkalibacterium halodurans (strain ATCC BAA-125 / DSM 18197 / FERM 7344 / JCM 9153 / C-125) (Bacillus halodurans).